Consider the following 506-residue polypeptide: Deoxyguanosinetriphosphate triphosphohydrolase (506 aa).

In terms of domain architecture, HD spans 66–274 (RLTHSLEVQQ…MEAADDISYC (209 aa)).

This sequence belongs to the dGTPase family. Type 1 subfamily. As to quaternary structure, homotetramer. Requires Mg(2+) as cofactor.

The enzyme catalyses dGTP + H2O = 2'-deoxyguanosine + triphosphate + H(+). Functionally, dGTPase preferentially hydrolyzes dGTP over the other canonical NTPs. This Yersinia pseudotuberculosis serotype O:3 (strain YPIII) protein is Deoxyguanosinetriphosphate triphosphohydrolase.